A 130-amino-acid polypeptide reads, in one-letter code: S-adenosylmethionine decarboxylase proenzyme (130 aa).

The Schiff-base intermediate with substrate; via pyruvic acid role is filled by serine 63. Serine 63 is subject to Pyruvic acid (Ser); by autocatalysis. The Proton acceptor; for processing activity role is filled by histidine 68. Cysteine 83 (proton donor; for catalytic activity) is an active-site residue.

It belongs to the prokaryotic AdoMetDC family. Type 1 subfamily. As to quaternary structure, heterotetramer of two alpha and two beta chains arranged as a dimer of alpha/beta heterodimers. It depends on pyruvate as a cofactor. In terms of processing, is synthesized initially as an inactive proenzyme. Formation of the active enzyme involves a self-maturation process in which the active site pyruvoyl group is generated from an internal serine residue via an autocatalytic post-translational modification. Two non-identical subunits are generated from the proenzyme in this reaction, and the pyruvate is formed at the N-terminus of the alpha chain, which is derived from the carboxyl end of the proenzyme. The post-translation cleavage follows an unusual pathway, termed non-hydrolytic serinolysis, in which the side chain hydroxyl group of the serine supplies its oxygen atom to form the C-terminus of the beta chain, while the remainder of the serine residue undergoes an oxidative deamination to produce ammonia and the pyruvoyl group blocking the N-terminus of the alpha chain.

The enzyme catalyses S-adenosyl-L-methionine + H(+) = S-adenosyl 3-(methylsulfanyl)propylamine + CO2. It participates in amine and polyamine biosynthesis; S-adenosylmethioninamine biosynthesis; S-adenosylmethioninamine from S-adenosyl-L-methionine: step 1/1. Catalyzes the decarboxylation of S-adenosylmethionine to S-adenosylmethioninamine (dcAdoMet), the propylamine donor required for the synthesis of the polyamines spermine and spermidine from the diamine putrescine. The protein is S-adenosylmethionine decarboxylase proenzyme of Thermosipho africanus (strain TCF52B).